A 722-amino-acid chain; its full sequence is G2-specific protein kinase fin1 (722 aa).

The Protein kinase domain occupies 4–281 (YKILECIGHG…TYQLLRSPIL (278 aa)). ATP-binding positions include 10 to 18 (IGHGSFGRI) and K33. The Proton acceptor role is filled by D151. The segment at 528–557 (LSVESDETAVSASSGESVPTDSTLTDTKSK) is disordered. Residues 535 to 546 (TAVSASSGESVP) are compositionally biased toward polar residues.

This sequence belongs to the protein kinase superfamily. Ser/Thr protein kinase family. NIMA subfamily.

It is found in the cytoplasm. Its subcellular location is the cytoskeleton. It localises to the microtubule organizing center. The protein localises to the spindle pole body. It carries out the reaction L-seryl-[protein] + ATP = O-phospho-L-seryl-[protein] + ADP + H(+). It catalyses the reaction L-threonyl-[protein] + ATP = O-phospho-L-threonyl-[protein] + ADP + H(+). Functionally, promotes chromosome condensation and nuclear envelope dynamics during mitosis. Activity appears at metaphase-anaphase transition. This Schizosaccharomyces pombe (strain 972 / ATCC 24843) (Fission yeast) protein is G2-specific protein kinase fin1 (fin1).